Reading from the N-terminus, the 380-residue chain is Cytochrome b (380 aa).

The next 4 helical transmembrane spans lie at 34–54 (FGSL…FLAM), 78–99 (WLLR…YFHI), 114–134 (WYTG…GYIL), and 179–199 (FFTL…IHLL). Heme b-binding residues include histidine 84 and histidine 98. Residues histidine 183 and histidine 197 each coordinate heme b. Histidine 202 is a binding site for a ubiquinone. Transmembrane regions (helical) follow at residues 227 to 247 (YKDL…TLFL), 289 to 309 (LGGV…PTLH), 321 to 341 (FTQI…WIGA), and 348 to 368 (FIMI…LLIP).

This sequence belongs to the cytochrome b family. The cytochrome bc1 complex contains 3 respiratory subunits (MT-CYB, CYC1 and UQCRFS1), 2 core proteins (UQCRC1 and UQCRC2) and probably 6 low-molecular weight proteins. Requires heme b as cofactor.

It localises to the mitochondrion inner membrane. Component of the ubiquinol-cytochrome c reductase complex (complex III or cytochrome b-c1 complex) that is part of the mitochondrial respiratory chain. The b-c1 complex mediates electron transfer from ubiquinol to cytochrome c. Contributes to the generation of a proton gradient across the mitochondrial membrane that is then used for ATP synthesis. This chain is Cytochrome b (MT-CYB), found in Pelomedusa subrufa (African side-necked turtle).